Consider the following 217-residue polypeptide: Lipid A acyltransferase PagP (217 aa).

Residues 1–24 form the signal peptide; that stretch reads MYLKRILITLSLITLPIVPCLSYA. Active-site residues include H89, D132, and S133.

It belongs to the lipid A palmitoyltransferase family. As to quaternary structure, homodimer.

It localises to the cell outer membrane. The enzyme catalyses a lipid A + a 1,2-diacyl-sn-glycero-3-phosphocholine = a hepta-acyl lipid A + a 2-acyl-sn-glycero-3-phosphocholine. The catalysed reaction is a lipid IVA + a 1,2-diacyl-sn-glycero-3-phosphocholine = a lipid IVB + a 2-acyl-sn-glycero-3-phosphocholine. It carries out the reaction a lipid IIA + a 1,2-diacyl-sn-glycero-3-phosphocholine = a lipid IIB + a 2-acyl-sn-glycero-3-phosphocholine. In terms of biological role, transfers a fatty acid residue from the sn-1 position of a phospholipid to the N-linked hydroxyfatty acid chain on the proximal unit of lipid A or its precursors. The protein is Lipid A acyltransferase PagP of Pectobacterium atrosepticum (strain SCRI 1043 / ATCC BAA-672) (Erwinia carotovora subsp. atroseptica).